A 358-amino-acid polypeptide reads, in one-letter code: Magnesium-protoporphyrin IX monomethyl ester [oxidative] cyclase 2 (358 aa).

This sequence belongs to the AcsF family. Fe cation is required as a cofactor.

It catalyses the reaction Mg-protoporphyrin IX 13-monomethyl ester + 3 NADPH + 3 O2 + 2 H(+) = 3,8-divinyl protochlorophyllide a + 3 NADP(+) + 5 H2O. It participates in porphyrin-containing compound metabolism; chlorophyll biosynthesis (light-independent). Catalyzes the formation of the isocyclic ring in chlorophyll biosynthesis. Mediates the cyclase reaction, which results in the formation of divinylprotochlorophyllide (Pchlide) characteristic of all chlorophylls from magnesium-protoporphyrin IX 13-monomethyl ester (MgPMME). The chain is Magnesium-protoporphyrin IX monomethyl ester [oxidative] cyclase 2 from Synechocystis sp. (strain ATCC 27184 / PCC 6803 / Kazusa).